The primary structure comprises 311 residues: tRNA dimethylallyltransferase 2 (311 aa).

ATP is bound at residue 15 to 22 (GPTAVGKT). A substrate-binding site is contributed by 17–22 (TAVGKT). Positions 40 to 43 (DSMQ) are interaction with substrate tRNA.

This sequence belongs to the IPP transferase family. In terms of assembly, monomer. It depends on Mg(2+) as a cofactor.

The catalysed reaction is adenosine(37) in tRNA + dimethylallyl diphosphate = N(6)-dimethylallyladenosine(37) in tRNA + diphosphate. Its function is as follows. Catalyzes the transfer of a dimethylallyl group onto the adenine at position 37 in tRNAs that read codons beginning with uridine, leading to the formation of N6-(dimethylallyl)adenosine (i(6)A). This is tRNA dimethylallyltransferase 2 from Syntrophus aciditrophicus (strain SB).